A 338-amino-acid chain; its full sequence is S-adenosylmethionine:tRNA ribosyltransferase-isomerase (338 aa).

Belongs to the QueA family. As to quaternary structure, monomer.

Its subcellular location is the cytoplasm. It carries out the reaction 7-aminomethyl-7-carbaguanosine(34) in tRNA + S-adenosyl-L-methionine = epoxyqueuosine(34) in tRNA + adenine + L-methionine + 2 H(+). Its pathway is tRNA modification; tRNA-queuosine biosynthesis. In terms of biological role, transfers and isomerizes the ribose moiety from AdoMet to the 7-aminomethyl group of 7-deazaguanine (preQ1-tRNA) to give epoxyqueuosine (oQ-tRNA). This is S-adenosylmethionine:tRNA ribosyltransferase-isomerase from Francisella tularensis subsp. mediasiatica (strain FSC147).